The following is a 565-amino-acid chain: 4-coumarate--CoA ligase-like 2 (565 aa).

ATP-binding residues include Ser221, Ser222, Gly223, Thr224, Thr225, and Lys229. Phe265 lines the (E)-4-coumaroyl-AMP pocket. Position 286 (Lys286) interacts with CoA. Residues 288–359 are SBD1; the sequence is DMAKLLSAVE…ENYPKVKILQ (72 aa). Residues Gly337, Gln359, Gly360, and Thr364 each contribute to the (E)-4-coumaroyl-AMP site. Residues Gln359, Gly360, Thr364, Asp445, and Arg460 each coordinate ATP. Residues 360–424 form an SBD2 region; that stretch reads GYGLTESTAI…IRSPTVMKGY (65 aa). (E)-4-coumaroyl-AMP-binding residues include Lys462 and Lys466. Gly469 contributes to the CoA binding site. Residue Lys551 coordinates ATP. Positions 563-565 match the Microbody targeting signal motif; sequence SKL.

The protein belongs to the ATP-dependent AMP-binding enzyme family. It depends on Mg(2+) as a cofactor.

The protein resides in the peroxisome. The catalysed reaction is (E)-4-coumarate + ATP + CoA = (E)-4-coumaroyl-CoA + AMP + diphosphate. It carries out the reaction (E)-4-coumarate + ATP + H(+) = (E)-4-coumaroyl-AMP + diphosphate. It catalyses the reaction (E)-4-coumaroyl-AMP + CoA = (E)-4-coumaroyl-CoA + AMP + H(+). Functionally, carboxylate--CoA ligase that may use 4-coumarate as substrate. Follows a two-step reaction mechanism, wherein the carboxylate substrate first undergoes adenylation by ATP, followed by a thioesterification in the presence of CoA to yield the final CoA thioester. In Arabidopsis thaliana (Mouse-ear cress), this protein is 4-coumarate--CoA ligase-like 2.